Reading from the N-terminus, the 120-residue chain is Non-specific lipid-transfer protein 6 (120 aa).

Residues 1–26 (MARSMSLKLACVVVLCLLVDAPLAQG) form the signal peptide. Cystine bridges form between Cys-57/Cys-102 and Cys-77/Cys-116.

This sequence belongs to the plant LTP family. Specifically expressed in fiber cells.

Plant non-specific lipid-transfer proteins transfer phospholipids as well as galactolipids across membranes. May play a role in wax or cutin deposition in the cell walls of expanding epidermal cells and certain secretory tissues. The sequence is that of Non-specific lipid-transfer protein 6 (LTP6) from Gossypium hirsutum (Upland cotton).